The primary structure comprises 390 residues: Probable purine permease 18 (390 aa).

The span at 1-14 (MEMTEASKQTTAEG) shows a compositional bias: polar residues. Residues 1–23 (MEMTEASKQTTAEGSANPEPDQI) are disordered. S25 is subject to Phosphoserine. 10 consecutive transmembrane segments (helical) span residues 39 to 59 (ISVS…MLLL), 81 to 101 (WLQA…FFIF), 120 to 140 (LILL…LFAL), 148 to 168 (GVFT…AAII), 176 to 196 (WIIL…PEFG), 211 to 231 (WLTF…QLCF), 250 to 270 (VIEM…VGLF), 297 to 317 (IGLA…VLYV), 324 to 344 (VVHM…FDFM), and 348 to 368 (FSWP…SYFY).

The protein belongs to the purine permeases (TC 2.A.7.14) family.

The protein resides in the membrane. The chain is Probable purine permease 18 (PUP18) from Arabidopsis thaliana (Mouse-ear cress).